Reading from the N-terminus, the 777-residue chain is Endonuclease MutS2 (777 aa).

328–335 (GPNTGGKT) provides a ligand contact to ATP. A Smr domain is found at 702 to 777 (LDLRGKRYEE…GSGATIVIFK (76 aa)).

Belongs to the DNA mismatch repair MutS family. MutS2 subfamily. Homodimer. Binds to stalled ribosomes, contacting rRNA.

Endonuclease that is involved in the suppression of homologous recombination and thus may have a key role in the control of bacterial genetic diversity. In terms of biological role, acts as a ribosome collision sensor, splitting the ribosome into its 2 subunits. Detects stalled/collided 70S ribosomes which it binds and splits by an ATP-hydrolysis driven conformational change. Acts upstream of the ribosome quality control system (RQC), a ribosome-associated complex that mediates the extraction of incompletely synthesized nascent chains from stalled ribosomes and their subsequent degradation. Probably generates substrates for RQC. The sequence is that of Endonuclease MutS2 from Streptococcus sanguinis (strain SK36).